The following is a 339-amino-acid chain: tRNA N6-adenosine threonylcarbamoyltransferase (339 aa).

Residues H111 and H115 each coordinate Fe cation. Residues 134–138 (LVSGG), D167, G180, and N272 contribute to the substrate site. D300 lines the Fe cation pocket.

This sequence belongs to the KAE1 / TsaD family. It depends on Fe(2+) as a cofactor.

Its subcellular location is the cytoplasm. It catalyses the reaction L-threonylcarbamoyladenylate + adenosine(37) in tRNA = N(6)-L-threonylcarbamoyladenosine(37) in tRNA + AMP + H(+). Required for the formation of a threonylcarbamoyl group on adenosine at position 37 (t(6)A37) in tRNAs that read codons beginning with adenine. Is involved in the transfer of the threonylcarbamoyl moiety of threonylcarbamoyl-AMP (TC-AMP) to the N6 group of A37, together with TsaE and TsaB. TsaD likely plays a direct catalytic role in this reaction. This is tRNA N6-adenosine threonylcarbamoyltransferase from Sodalis glossinidius (strain morsitans).